The following is a 199-amino-acid chain: Photosystem I reaction center subunit XI (199 aa).

The next 2 helical transmembrane spans lie at 108–128 (LTAG…LLVL) and 165–185 (FWLG…TLHL).

The protein belongs to the PsaL family.

The protein localises to the cellular thylakoid membrane. The polypeptide is Photosystem I reaction center subunit XI (Prochlorococcus marinus (strain AS9601)).